We begin with the raw amino-acid sequence, 382 residues long: Alkanesulfonate monooxygenase (382 aa).

It belongs to the SsuD family. Homotetramer.

It catalyses the reaction an alkanesulfonate + FMNH2 + O2 = an aldehyde + FMN + sulfite + H2O + 2 H(+). Its function is as follows. Catalyzes the desulfonation of aliphatic sulfonates. The polypeptide is Alkanesulfonate monooxygenase (Yersinia pseudotuberculosis serotype IB (strain PB1/+)).